Here is a 198-residue protein sequence, read N- to C-terminus: UPF0312 protein PFL_5802 (198 aa).

The first 23 residues, 1-23 (MLKKTLAALAIGSAVLAAGQVMA), serve as a signal peptide directing secretion.

The protein belongs to the UPF0312 family. Type 1 subfamily.

Its subcellular location is the periplasm. This is UPF0312 protein PFL_5802 from Pseudomonas fluorescens (strain ATCC BAA-477 / NRRL B-23932 / Pf-5).